A 54-amino-acid chain; its full sequence is Large ribosomal subunit protein bL33 (54 aa).

Belongs to the bacterial ribosomal protein bL33 family.

In Rhodopirellula baltica (strain DSM 10527 / NCIMB 13988 / SH1), this protein is Large ribosomal subunit protein bL33.